Reading from the N-terminus, the 288-residue chain is Polyamine aminopropyltransferase (288 aa).

In terms of domain architecture, PABS spans 9 to 238 (ETLHDQFGQY…GIMTFAWATD (230 aa)). Residue Gln-33 coordinates S-methyl-5'-thioadenosine. Positions 64 and 88 each coordinate spermidine. S-methyl-5'-thioadenosine-binding positions include Glu-108 and 140-141 (DG). Asp-158 functions as the Proton acceptor in the catalytic mechanism. 158–161 (DCTD) serves as a coordination point for spermidine. Position 165 (Pro-165) interacts with S-methyl-5'-thioadenosine.

This sequence belongs to the spermidine/spermine synthase family. Homodimer or homotetramer.

It localises to the cytoplasm. The enzyme catalyses S-adenosyl 3-(methylsulfanyl)propylamine + putrescine = S-methyl-5'-thioadenosine + spermidine + H(+). The protein operates within amine and polyamine biosynthesis; spermidine biosynthesis; spermidine from putrescine: step 1/1. Functionally, catalyzes the irreversible transfer of a propylamine group from the amino donor S-adenosylmethioninamine (decarboxy-AdoMet) to putrescine (1,4-diaminobutane) to yield spermidine. The protein is Polyamine aminopropyltransferase of Escherichia coli (strain ATCC 8739 / DSM 1576 / NBRC 3972 / NCIMB 8545 / WDCM 00012 / Crooks).